The chain runs to 110 residues: Protein YcgL (110 aa).

In terms of domain architecture, YcgL spans 14–98; sequence MFCVIYRSSK…PPEDLLKQHL (85 aa). Residues 87-110 form a disordered region; sequence PPPPEDLLKQHLSSVGQNTSPADR. Residues 97-110 show a composition bias toward polar residues; it reads HLSSVGQNTSPADR.

In Salmonella choleraesuis (strain SC-B67), this protein is Protein YcgL.